The primary structure comprises 177 residues: Nucleoside triphosphate/diphosphate phosphatase (177 aa).

R23 serves as the catalytic Proton donor. 6 residues coordinate Mg(2+): N87, D103, D105, D107, D120, and E123.

It belongs to the Ntdp family. Requires Mg(2+) as cofactor.

It catalyses the reaction a ribonucleoside 5'-triphosphate + H2O = a ribonucleoside 5'-diphosphate + phosphate + H(+). It carries out the reaction a ribonucleoside 5'-diphosphate + H2O = a ribonucleoside 5'-phosphate + phosphate + H(+). Its function is as follows. Has nucleoside phosphatase activity towards nucleoside triphosphates and nucleoside diphosphates. The chain is Nucleoside triphosphate/diphosphate phosphatase from Streptococcus thermophilus (strain CNRZ 1066).